We begin with the raw amino-acid sequence, 219 residues long: Transmembrane protein 179B (219 aa).

The next 4 helical transmembrane spans lie at 9-29, 65-85, 98-118, and 162-182; these read VELL…ATLT, FVAG…FFWV, IGLR…LVSA, and LHTA…ALLL. Phosphoserine is present on Ser206.

The protein belongs to the TMEM179 family.

It is found in the membrane. The protein is Transmembrane protein 179B (Tmem179b) of Mus musculus (Mouse).